Consider the following 620-residue polypeptide: Arginine--tRNA ligase (620 aa).

The 'HIGH' region signature appears at 147 to 157; that stretch reads ANPTGPIHIGG.

The protein belongs to the class-I aminoacyl-tRNA synthetase family. As to quaternary structure, monomer.

It localises to the cytoplasm. The enzyme catalyses tRNA(Arg) + L-arginine + ATP = L-arginyl-tRNA(Arg) + AMP + diphosphate. This chain is Arginine--tRNA ligase, found in Bifidobacterium longum subsp. infantis (strain ATCC 15697 / DSM 20088 / JCM 1222 / NCTC 11817 / S12).